Reading from the N-terminus, the 1071-residue chain is ATP-dependent helicase/deoxyribonuclease subunit B (1071 aa).

Belongs to the helicase family. AddB/RexB type 2 subfamily. As to quaternary structure, heterodimer of AddA and RexB. The cofactor is Mg(2+).

Functionally, the heterodimer acts as both an ATP-dependent DNA helicase and an ATP-dependent, dual-direction single-stranded exonuclease. Recognizes the chi site generating a DNA molecule suitable for the initiation of homologous recombination. This subunit has 5' -&gt; 3' nuclease activity but not helicase activity. The sequence is that of ATP-dependent helicase/deoxyribonuclease subunit B from Streptococcus pyogenes serotype M12 (strain MGAS2096).